The chain runs to 363 residues: DNA replication and repair protein RecF (363 aa).

30–37 (GPNGSGKT) serves as a coordination point for ATP.

Belongs to the RecF family.

It is found in the cytoplasm. The RecF protein is involved in DNA metabolism; it is required for DNA replication and normal SOS inducibility. RecF binds preferentially to single-stranded, linear DNA. It also seems to bind ATP. In Chlorobium phaeobacteroides (strain BS1), this protein is DNA replication and repair protein RecF.